Here is a 373-residue protein sequence, read N- to C-terminus: UDP-N-acetylglucosamine--N-acetylmuramyl-(pentapeptide) pyrophosphoryl-undecaprenol N-acetylglucosamine transferase (373 aa).

UDP-N-acetyl-alpha-D-glucosamine contacts are provided by residues 10–12 (TGG), Asn124, Arg166, Ser196, and Gln301.

This sequence belongs to the glycosyltransferase 28 family. MurG subfamily.

The protein resides in the cell membrane. The catalysed reaction is di-trans,octa-cis-undecaprenyl diphospho-N-acetyl-alpha-D-muramoyl-L-alanyl-D-glutamyl-meso-2,6-diaminopimeloyl-D-alanyl-D-alanine + UDP-N-acetyl-alpha-D-glucosamine = di-trans,octa-cis-undecaprenyl diphospho-[N-acetyl-alpha-D-glucosaminyl-(1-&gt;4)]-N-acetyl-alpha-D-muramoyl-L-alanyl-D-glutamyl-meso-2,6-diaminopimeloyl-D-alanyl-D-alanine + UDP + H(+). It functions in the pathway cell wall biogenesis; peptidoglycan biosynthesis. Its function is as follows. Cell wall formation. Catalyzes the transfer of a GlcNAc subunit on undecaprenyl-pyrophosphoryl-MurNAc-pentapeptide (lipid intermediate I) to form undecaprenyl-pyrophosphoryl-MurNAc-(pentapeptide)GlcNAc (lipid intermediate II). This is UDP-N-acetylglucosamine--N-acetylmuramyl-(pentapeptide) pyrophosphoryl-undecaprenol N-acetylglucosamine transferase from Desulforudis audaxviator (strain MP104C).